Consider the following 269-residue polypeptide: Phosphonoacetaldehyde hydrolase (269 aa).

D10 serves as the catalytic Nucleophile. The Mg(2+) site is built by D10 and A12. K52 acts as the Schiff-base intermediate with substrate in catalysis. A Mg(2+)-binding site is contributed by D186.

The protein belongs to the HAD-like hydrolase superfamily. PhnX family. Homodimer. The cofactor is Mg(2+).

It catalyses the reaction phosphonoacetaldehyde + H2O = acetaldehyde + phosphate + H(+). Involved in phosphonate degradation. This Salmonella agona (strain SL483) protein is Phosphonoacetaldehyde hydrolase.